Reading from the N-terminus, the 337-residue chain is Dihydroorotate dehydrogenase (quinone) (337 aa).

FMN is bound by residues 61 to 65 (AGLDK) and threonine 85. Position 65 (lysine 65) interacts with substrate. Residue 110–114 (NRMGF) coordinates substrate. Asparagine 138 and asparagine 171 together coordinate FMN. A substrate-binding site is contributed by asparagine 171. The Nucleophile role is filled by serine 174. Asparagine 176 lines the substrate pocket. FMN contacts are provided by lysine 216 and threonine 244. Position 245 to 246 (245 to 246 (NT)) interacts with substrate. FMN contacts are provided by residues glycine 267, glycine 296, and 317–318 (YS).

The protein belongs to the dihydroorotate dehydrogenase family. Type 2 subfamily. Monomer. Requires FMN as cofactor.

Its subcellular location is the cell membrane. The catalysed reaction is (S)-dihydroorotate + a quinone = orotate + a quinol. Its pathway is pyrimidine metabolism; UMP biosynthesis via de novo pathway; orotate from (S)-dihydroorotate (quinone route): step 1/1. Its function is as follows. Catalyzes the conversion of dihydroorotate to orotate with quinone as electron acceptor. This chain is Dihydroorotate dehydrogenase (quinone), found in Thiobacillus denitrificans (strain ATCC 25259 / T1).